The sequence spans 21 residues: Major outer membrane protein (21 aa).

As to quaternary structure, disulfide bond interactions within and between MOMP molecules and other components form high molecular-weight oligomers.

The protein localises to the cell outer membrane. In terms of biological role, structural rigidity of the outer membrane of elementary bodies and porin forming, permitting diffusion of solutes through the intracellular reticulate body membrane. This is Major outer membrane protein from Actinobacillus equuli.